The following is a 375-amino-acid chain: Prophage integrase IntE (375 aa).

In terms of domain architecture, Core-binding (CB) spans 82-167 (ITTSTWLDRY…VLIDVFKEAQ (86 aa)). The Tyr recombinase domain maps to 189–375 (ITRQRLSLEE…RGKGWSKVAL (187 aa)). Catalysis depends on residues Arg-226, Lys-249, His-330, Arg-333, and His-353. The segment at 350–375 (LLGHKTQQQTDRYHDDRGKGWSKVAL) is disordered. Tyr-362 (O-(3'-phospho-DNA)-tyrosine intermediate) is an active-site residue.

The protein belongs to the 'phage' integrase family.

Functionally, integrase from the cryptic lambdoid prophage e14. Integrase is necessary for integration of the phage into the host genome by site-specific recombination. In conjunction with excisionase, integrase is also necessary for excision of the prophage from the host genome. The protein is Prophage integrase IntE (intE) of Escherichia coli (strain K12).